Reading from the N-terminus, the 703-residue chain is uncharacterized protein (703 aa).

A run of 4 helical transmembrane segments spans residues 23–43 (IAMSGAISAGAYSAGVFDFLI), 69–89 (ALSGASAGAITAAIGVIAAGG), 143–163 (PVISVLNANVLTAIGAEALEA), and 250–270 (PPEWLAFANAALASGAFPIGL). A PNPLA domain is found at 23-335 (IAMSGAISAG…INNDPFEFVR (313 aa)). Positions 72–76 (GASAG) match the GXSXG motif. S74 acts as the Nucleophile in catalysis. The active-site Proton acceptor is D322. Residues 322 to 324 (DGG) carry the DGA/G motif. 3 helical membrane-spanning segments follow: residues 357–377 (VIMIAPFPEGPPFLGDGEPPL), 432–452 (ETFSIASGLLGGFGGFVLEAF), and 644–664 (ILSTLAGAAGANCQVWLAPWT).

It localises to the cell membrane. This is an uncharacterized protein from Sinorhizobium fredii (strain NBRC 101917 / NGR234).